A 193-amino-acid polypeptide reads, in one-letter code: Ion-translocating oxidoreductase complex subunit A (193 aa).

A run of 6 helical transmembrane segments spans residues 4–24 (LALI…KFLG), 38–58 (AMGM…CSYL), 65–85 (APLG…AVVV), 102–122 (VLGI…VALL), 134–154 (AVYG…FAAL), and 171–191 (SVAL…AGLV).

It belongs to the NqrDE/RnfAE family. The complex is composed of six subunits: RnfA, RnfB, RnfC, RnfD, RnfE and RnfG.

Its subcellular location is the cell inner membrane. Functionally, part of a membrane-bound complex that couples electron transfer with translocation of ions across the membrane. This Alkalilimnicola ehrlichii (strain ATCC BAA-1101 / DSM 17681 / MLHE-1) protein is Ion-translocating oxidoreductase complex subunit A.